A 395-amino-acid chain; its full sequence is Endophilin-B2 (395 aa).

M1 is modified (N-acetylmethionine). Positions 1 to 27 (MDFNMKKLASDAGIFFTRAVQFTEEKF) are membrane-binding amphipathic helix. A Phosphoserine modification is found at S10. In terms of domain architecture, BAR spans 24 to 287 (EEKFGQAEKT…LGRFPGTFVG (264 aa)). 2 coiled-coil regions span residues 116 to 132 (IKVA…ERDF) and 206 to 240 (ASAL…LLLE). One can recognise an SH3 domain in the interval 335 to 395 (SGTRKARVLY…VPVTYLELLS (61 aa)). S395 is subject to Phosphoserine.

This sequence belongs to the endophilin family. Homodimer, and heterodimer with SH3GLB1.

Its subcellular location is the cytoplasm. This is Endophilin-B2 (SH3GLB2) from Bos taurus (Bovine).